The chain runs to 241 residues: Fatty acid metabolism regulator protein (241 aa).

The region spanning 6–74 (KGPASFAEKY…HGKPTRVNNF (69 aa)) is the HTH gntR-type domain. Positions 34 to 53 (ERELSELIGVTRTTLREVLQ) form a DNA-binding region, H-T-H motif.

Homodimer.

It localises to the cytoplasm. Its function is as follows. Multifunctional regulator of fatty acid metabolism. The sequence is that of Fatty acid metabolism regulator protein from Shewanella sp. (strain ANA-3).